Reading from the N-terminus, the 293-residue chain is Undecaprenyl-diphosphatase (293 aa).

The next 7 membrane-spanning stretches (helical) occupy residues 3–23, 43–63, 85–105, 109–129, 203–223, 238–258, and 269–289; these read IALA…EFLP, KGKI…CWEF, INVI…GKAI, LFNP…ILWA, VATE…TVYE, IFAV…RWLL, and FAWY…THLI.

This sequence belongs to the UppP family.

It is found in the cell inner membrane. It catalyses the reaction di-trans,octa-cis-undecaprenyl diphosphate + H2O = di-trans,octa-cis-undecaprenyl phosphate + phosphate + H(+). Its function is as follows. Catalyzes the dephosphorylation of undecaprenyl diphosphate (UPP). Confers resistance to bacitracin. In Ralstonia pickettii (strain 12J), this protein is Undecaprenyl-diphosphatase.